The sequence spans 601 residues: Sestrin homolog (601 aa).

The segment covering 1-11 (MISMGMTSKGQ) has biased composition (polar residues). Residues 1–58 (MISMGMTSKGQNVDGAPAGNSSSEWIISSSSSPFQANKRYSLDPPFGSDYSPPASPQN) are disordered. The N-linked (GlcNAc...) asparagine glycan is linked to Asn-20. Low complexity predominate over residues 21 to 32 (SSSEWIISSSSS). 2 N-linked (GlcNAc...) asparagine glycosylation sites follow: Asn-322 and Asn-330. Residues 355-425 (RRSQQQDDDD…DSSSSTLSQS (71 aa)) form a disordered region. Basic and acidic residues predominate over residues 368-379 (LHDRQQDFHNAG). Over residues 380–425 (DDSQSSNNNTTTTTTTTTTTTTTTNTNTTSNSAGGGDSSSSTLSQS) the composition is skewed to low complexity. Asn-387, Asn-388, Asn-406, Asn-438, and Asn-499 each carry an N-linked (GlcNAc...) asparagine glycan.

It belongs to the sestrin family.

It is found in the nucleus. It localises to the cytoplasm. In terms of biological role, may function as a negative feedback regulator of TOR function. The chain is Sestrin homolog from Dictyostelium discoideum (Social amoeba).